A 231-amino-acid chain; its full sequence is Two-component response regulator ORR1 (231 aa).

Positions 9–135 (RVLLVDDSPV…DVQRLRNCSP (127 aa)) constitute a Response regulatory domain. Position 68 is a 4-aspartylphosphate (Asp68).

It belongs to the ARR family. Type-A subfamily. Two-component system major event consists of a His-to-Asp phosphorelay between a sensor histidine kinase (HK) and a response regulator (RR). In plants, the His-to-Asp phosphorelay involves an additional intermediate named Histidine-containing phosphotransfer protein (HPt). This multistep phosphorelay consists of a His-Asp-His-Asp sequential transfer of a phosphate group between first a His and an Asp of the HK protein, followed by the transfer to a conserved His of the HPt protein and finally the transfer to an Asp in the receiver domain of the RR protein. As to expression, expressed in roots, leaf blades, leaf sheaths, shoot apex, flowers and panicles.

Functions as a response regulator involved in His-to-Asp phosphorelay signal transduction system. Phosphorylation of the Asp residue in the receiver domain activates the ability of the protein to promote the transcription of target genes. Type-A response regulators seem to act as negative regulators of the cytokinin signaling. Involved in adventitious (crown) root initiation under the regulation of CRL5. In Oryza sativa subsp. japonica (Rice), this protein is Two-component response regulator ORR1.